A 189-amino-acid polypeptide reads, in one-letter code: Interferon alpha-12 (189 aa).

An N-terminal signal peptide occupies residues 1–23 (MARLCAFLMTLLVMSYWSTCSLG). Cystine bridges form between C24–C122 and C52–C162. N101 is a glycosylation site (N-linked (GlcNAc...) asparagine).

This sequence belongs to the alpha/beta interferon family.

The protein resides in the secreted. In terms of biological role, produced by macrophages, IFN-alpha have antiviral activities. Interferon stimulates the production of two enzymes: a protein kinase and an oligoadenylate synthetase. The sequence is that of Interferon alpha-12 (Ifna12) from Mus musculus (Mouse).